The following is a 742-amino-acid chain: 5-methyltetrahydropteroyltriglutamate--homocysteine methyltransferase (742 aa).

Residues 18–21 (REWK) and Lys112 each bind 5-methyltetrahydropteroyltri-L-glutamate. L-homocysteine is bound by residues 420–422 (IGS) and Glu473. L-methionine contacts are provided by residues 420–422 (IGS) and Glu473. Residue Trp550 coordinates 5-methyltetrahydropteroyltri-L-glutamate. Residue Asp588 participates in L-homocysteine binding. An L-methionine-binding site is contributed by Asp588. Glu594 is a binding site for 5-methyltetrahydropteroyltri-L-glutamate. Zn(2+)-binding residues include His630, Cys632, and Glu654. The Proton donor role is filled by His683. Residue Cys715 participates in Zn(2+) binding.

Belongs to the vitamin-B12 independent methionine synthase family. The cofactor is Zn(2+).

The enzyme catalyses 5-methyltetrahydropteroyltri-L-glutamate + L-homocysteine = tetrahydropteroyltri-L-glutamate + L-methionine. It functions in the pathway amino-acid biosynthesis; L-methionine biosynthesis via de novo pathway; L-methionine from L-homocysteine (MetE route): step 1/1. Functionally, catalyzes the transfer of a methyl group from 5-methyltetrahydrofolate to homocysteine resulting in methionine formation. The chain is 5-methyltetrahydropteroyltriglutamate--homocysteine methyltransferase from Staphylococcus aureus (strain USA300).